Consider the following 154-residue polypeptide: Ribosome maturation factor RimP (154 aa).

The protein belongs to the RimP family.

The protein resides in the cytoplasm. Functionally, required for maturation of 30S ribosomal subunits. The sequence is that of Ribosome maturation factor RimP from Alkaliphilus oremlandii (strain OhILAs) (Clostridium oremlandii (strain OhILAs)).